The primary structure comprises 664 residues: Ent-copalyl diphosphate synthase 5 (664 aa).

Lys101 contacts substrate. The Mg(2+) site is built by Asp233 and Asp235. The DXDD motif signature appears at 233–236 (DIDD). Lys320 lines the substrate pocket.

Belongs to the terpene synthase family. Tpsc subfamily. Mg(2+) is required as a cofactor. Ubiquitous expression in roots, stems, leaves and flowers.

It localises to the plastid. It is found in the chloroplast. The catalysed reaction is (2E,6E,10E)-geranylgeranyl diphosphate = ent-copalyl diphosphate. The protein operates within secondary metabolite biosynthesis; terpenoid biosynthesis. Its function is as follows. Involved in the biosynthesis of ent-kaurene diterpenoids natural products such as oridonin, miltiradiene, eriocalyxin B and nezukol, known to exhibit antitumor, anti-inflammatory and antibacterial activities. Catalyzes the conversion of (2E,6E,10E)-geranylgeranyl diphosphate (GGPP) to ent-copalyl diphosphate (ent-CPP). The chain is Ent-copalyl diphosphate synthase 5 from Isodon rubescens (Rabdosia rubescens).